The chain runs to 204 residues: Methylthioribulose-1-phosphate dehydratase (204 aa).

Zn(2+)-binding residues include histidine 96 and histidine 98.

It belongs to the aldolase class II family. MtnB subfamily. It depends on Zn(2+) as a cofactor.

The catalysed reaction is 5-(methylsulfanyl)-D-ribulose 1-phosphate = 5-methylsulfanyl-2,3-dioxopentyl phosphate + H2O. It participates in amino-acid biosynthesis; L-methionine biosynthesis via salvage pathway; L-methionine from S-methyl-5-thio-alpha-D-ribose 1-phosphate: step 2/6. In terms of biological role, catalyzes the dehydration of methylthioribulose-1-phosphate (MTRu-1-P) into 2,3-diketo-5-methylthiopentyl-1-phosphate (DK-MTP-1-P). The protein is Methylthioribulose-1-phosphate dehydratase of Methylococcus capsulatus (strain ATCC 33009 / NCIMB 11132 / Bath).